We begin with the raw amino-acid sequence, 585 residues long: Probable ubiquitin carboxyl-terminal hydrolase 9 (585 aa).

The segment at Met1 to Glu23 is disordered. The region spanning Tyr41 to Ala424 is the USP domain. Cys50 (nucleophile) is an active-site residue. A disordered region spans residues Cys85–Ser110. His375 acts as the Proton acceptor in catalysis. The segment covering Ser447–Thr470 has biased composition (polar residues). The interval Ser447 to Asp473 is disordered. Ser505 carries the phosphoserine modification. Disordered regions lie at residues Phe511 to Phe530 and Lys540 to Arg585. A compositionally biased stretch (polar residues) spans Phe542–Lys551. Ser549 carries the post-translational modification Phosphoserine. Basic and acidic residues predominate over residues Ser553–His570. Positions Leu574–Arg585 are enriched in polar residues.

It belongs to the peptidase C19 family. In terms of assembly, interacts with bun107 and bun62.

It is found in the nucleus. Its subcellular location is the cytoplasm. The protein resides in the cell tip. The enzyme catalyses Thiol-dependent hydrolysis of ester, thioester, amide, peptide and isopeptide bonds formed by the C-terminal Gly of ubiquitin (a 76-residue protein attached to proteins as an intracellular targeting signal).. In terms of biological role, ubiquitin C-terminal hydrolase involved in regulating actin dynamics and/or endocytosis at cell tips and septa. The polypeptide is Probable ubiquitin carboxyl-terminal hydrolase 9 (ubp9) (Schizosaccharomyces pombe (strain 972 / ATCC 24843) (Fission yeast)).